The chain runs to 316 residues: Pantothenate kinase (316 aa).

95–102 (GSVAVGKS) serves as a coordination point for ATP.

Belongs to the prokaryotic pantothenate kinase family.

Its subcellular location is the cytoplasm. It catalyses the reaction (R)-pantothenate + ATP = (R)-4'-phosphopantothenate + ADP + H(+). It participates in cofactor biosynthesis; coenzyme A biosynthesis; CoA from (R)-pantothenate: step 1/5. The polypeptide is Pantothenate kinase (Escherichia coli O17:K52:H18 (strain UMN026 / ExPEC)).